We begin with the raw amino-acid sequence, 340 residues long: Phosphoribosylformylglycinamidine cyclo-ligase (340 aa).

The protein belongs to the AIR synthase family.

It localises to the cytoplasm. It catalyses the reaction 2-formamido-N(1)-(5-O-phospho-beta-D-ribosyl)acetamidine + ATP = 5-amino-1-(5-phospho-beta-D-ribosyl)imidazole + ADP + phosphate + H(+). It functions in the pathway purine metabolism; IMP biosynthesis via de novo pathway; 5-amino-1-(5-phospho-D-ribosyl)imidazole from N(2)-formyl-N(1)-(5-phospho-D-ribosyl)glycinamide: step 2/2. The polypeptide is Phosphoribosylformylglycinamidine cyclo-ligase (Streptococcus pneumoniae (strain P1031)).